The sequence spans 422 residues: MLYYLFEWLHKLNFPGAGMFGYTSFRALMAIILALLISSIWGDKFINLLKRKQITETQRDAKIDPFGVNKVGVPSMGGVIIIVAILIPCLLLGKLHNIYMILMLITTVWLGSLGFADDYIKIFKKDKEGLHGKFKIIGQVGLGLIVGLTLYLSPDVVIRENIEVQKSENEIEVIHGTHDLKSTQTTIPFFKSNNLDYADLVGFMGEHAQTAGWILFVIITIFVVTAVSNGANLNDGMDGMAAGNSAIIGLTLGILAYVSSHIEFAGYLNIMYIPGSEELVIFICAFIGALIGFLWYNAYPAQVFMGDTGSLTIGGIIAVFAIIIHKELLIPILCGIFLVENLSVLLQRFYYKAGKRKGIKQRLFKRAPIHDHFRTSMSLVEPGCSVKFTKPDQLFHESKITVRFWIVTIVLAAITIITLKIR.

The next 9 membrane-spanning stretches (helical) occupy residues 28–48 (LMAI…FINL), 71–91 (VGVP…PCLL), 95–115 (LHNI…SLGF), 136–156 (IIGQ…SPDV), 211–231 (AGWI…SNGA), 246–266 (AIIG…EFAG), 279–299 (LVIF…YNAY), 313–333 (IGGI…IPIL), and 399–419 (KITV…IITL).

It belongs to the glycosyltransferase 4 family. MraY subfamily. Mg(2+) serves as cofactor.

It is found in the cell inner membrane. The catalysed reaction is UDP-N-acetyl-alpha-D-muramoyl-L-alanyl-gamma-D-glutamyl-meso-2,6-diaminopimeloyl-D-alanyl-D-alanine + di-trans,octa-cis-undecaprenyl phosphate = di-trans,octa-cis-undecaprenyl diphospho-N-acetyl-alpha-D-muramoyl-L-alanyl-D-glutamyl-meso-2,6-diaminopimeloyl-D-alanyl-D-alanine + UMP. The protein operates within cell wall biogenesis; peptidoglycan biosynthesis. Functionally, catalyzes the initial step of the lipid cycle reactions in the biosynthesis of the cell wall peptidoglycan: transfers peptidoglycan precursor phospho-MurNAc-pentapeptide from UDP-MurNAc-pentapeptide onto the lipid carrier undecaprenyl phosphate, yielding undecaprenyl-pyrophosphoryl-MurNAc-pentapeptide, known as lipid I. The sequence is that of Phospho-N-acetylmuramoyl-pentapeptide-transferase from Bacteroides fragilis (strain ATCC 25285 / DSM 2151 / CCUG 4856 / JCM 11019 / LMG 10263 / NCTC 9343 / Onslow / VPI 2553 / EN-2).